The chain runs to 298 residues: Acetylglutamate kinase (298 aa).

Substrate is bound by residues 69-70 (GG), arginine 91, and asparagine 196.

It belongs to the acetylglutamate kinase family. ArgB subfamily.

Its subcellular location is the cytoplasm. The catalysed reaction is N-acetyl-L-glutamate + ATP = N-acetyl-L-glutamyl 5-phosphate + ADP. It participates in amino-acid biosynthesis; L-arginine biosynthesis; N(2)-acetyl-L-ornithine from L-glutamate: step 2/4. Functionally, catalyzes the ATP-dependent phosphorylation of N-acetyl-L-glutamate. The polypeptide is Acetylglutamate kinase (Rhodopseudomonas palustris (strain TIE-1)).